The sequence spans 65 residues: UPF0337 protein gbs1203 (65 aa).

Basic and acidic residues predominate over residues Met-1–Lys-12. The interval Met-1 to Glu-29 is disordered.

The protein belongs to the UPF0337 (CsbD) family.

The protein is UPF0337 protein gbs1203 of Streptococcus agalactiae serotype III (strain NEM316).